Here is a 185-residue protein sequence, read N- to C-terminus: NEDD8-conjugating enzyme UBE2F (185 aa).

Residues 1–29 (MLTLASKLKRDDGVRGPRASNPASDSTRR) are interaction with UBA3. The interval 11–30 (DDGVRGPRASNPASDSTRRV) is disordered. The 154-residue stretch at 32 to 185 (VRDKLLVKEV…VEDYIKRYAR (154 aa)) folds into the UBC core domain. Cys-116 (glycyl thioester intermediate) is an active-site residue.

The protein belongs to the ubiquitin-conjugating enzyme family. UBE2F subfamily.

It catalyses the reaction [E1 NEDD8-activating enzyme]-S-[NEDD8 protein]-yl-L-cysteine + [E2 NEDD8-conjugating enzyme]-L-cysteine = [E1 NEDD8-activating enzyme]-L-cysteine + [E2 NEDD8-conjugating enzyme]-S-[NEDD8-protein]-yl-L-cysteine.. It functions in the pathway protein modification; protein neddylation. Accepts the ubiquitin-like protein NEDD8 from the UBA3-NAE1 E1 complex and catalyzes its covalent attachment to other proteins. Together with the E3 ubiquitin ligase RNF7/RBX2, specifically neddylates cullin-5 (CUL5). Does not neddylate CUL1, CUL2, CUL3, CUL4A or CUL4B. The polypeptide is NEDD8-conjugating enzyme UBE2F (UBE2F) (Gallus gallus (Chicken)).